The primary structure comprises 292 residues: Protease HtpX (292 aa).

The next 2 helical transmembrane spans lie at 5–25 and 35–55; these read VVLF…VMSV and GLLV…LLLS. Zn(2+) is bound at residue H140. The active site involves E141. Residue H144 participates in Zn(2+) binding. Transmembrane regions (helical) follow at residues 155 to 175 and 193 to 213; these read LLQG…GGII and IIVF…AMWF. Residue E218 coordinates Zn(2+).

Belongs to the peptidase M48B family. Zn(2+) serves as cofactor.

The protein resides in the cell inner membrane. The chain is Protease HtpX from Xanthomonas campestris pv. campestris (strain 8004).